The chain runs to 754 residues: Protein NUCLEOLAR FACTOR 1 (754 aa).

Disordered regions lie at residues 1–56, 69–166, and 390–413; these read MAPN…EAMV, SLGS…ELST, and EDTDDCDGEKTTSKNGNSIKQKSS. The span at 42-52 shows a compositional bias: acidic residues; that stretch reads SPEESSIEAES. The segment covering 80–93 has biased composition (basic and acidic residues); sequence MNKRRQREEEGKSD. 2 stretches are compositionally biased toward acidic residues: residues 94-110 and 138-161; these read TEEDEDDEDEDEEENSG and DTQEDNDNQSEEEDPDDYETDEEV. The span at 402 to 413 shows a compositional bias: polar residues; it reads SKNGNSIKQKSS.

The protein belongs to the UTP25 family. In terms of assembly, component of the ribosomal small subunit (SSU) processome composed of at least 40 protein subunits and snoRNA U3. Interacts with THAL in the nucleus. Preferentially expressed in differentiating cells in young tissues such as floral buds, ovules, embryos, secondary roots, pollen, young seedlings and vascular bundles. Observed ubiquitously.

The protein resides in the nucleus. Its subcellular location is the nucleolus. Its function is as follows. DEAD-box RNA helicase-like protein required for pre-18S rRNA processing, specifically at sites A0, A1, and A2. Involved in the control of rRNA expression. Required for embryo development and female gametogenesis. The sequence is that of Protein NUCLEOLAR FACTOR 1 from Arabidopsis thaliana (Mouse-ear cress).